Reading from the N-terminus, the 157-residue chain is SsrA-binding protein (157 aa).

This sequence belongs to the SmpB family.

It localises to the cytoplasm. In terms of biological role, required for rescue of stalled ribosomes mediated by trans-translation. Binds to transfer-messenger RNA (tmRNA), required for stable association of tmRNA with ribosomes. tmRNA and SmpB together mimic tRNA shape, replacing the anticodon stem-loop with SmpB. tmRNA is encoded by the ssrA gene; the 2 termini fold to resemble tRNA(Ala) and it encodes a 'tag peptide', a short internal open reading frame. During trans-translation Ala-aminoacylated tmRNA acts like a tRNA, entering the A-site of stalled ribosomes, displacing the stalled mRNA. The ribosome then switches to translate the ORF on the tmRNA; the nascent peptide is terminated with the 'tag peptide' encoded by the tmRNA and targeted for degradation. The ribosome is freed to recommence translation, which seems to be the essential function of trans-translation. This chain is SsrA-binding protein, found in Christiangramia forsetii (strain DSM 17595 / CGMCC 1.15422 / KT0803) (Gramella forsetii).